Reading from the N-terminus, the 328-residue chain is Cytochrome c biogenesis protein CcsA (328 aa).

8 consecutive transmembrane segments (helical) span residues 15–35 (FLVL…PSVP), 37–57 (LQAL…ALLG), 68–88 (ISNL…AHLI), 97–117 (LVGV…ALTL), 142–162 (VMML…AFLF), 236–256 (IIGL…VWAN), 271–291 (WALI…TKGW), and 297–317 (AILA…VNLL).

It belongs to the CcmF/CycK/Ccl1/NrfE/CcsA family. May interact with ccs1.

The protein localises to the cellular thylakoid membrane. Functionally, required during biogenesis of c-type cytochromes (cytochrome c6 and cytochrome f) at the step of heme attachment. This Gloeothece citriformis (strain PCC 7424) (Cyanothece sp. (strain PCC 7424)) protein is Cytochrome c biogenesis protein CcsA.